The following is a 975-amino-acid chain: Importin-11 (975 aa).

Met-1 is modified (N-acetylmethionine). Positions 28 to 100 (AEEQLKQWET…RAGLITNFNE (73 aa)) constitute an Importin N-terminal domain. HEAT repeat units follow at residues 123-160 (RQWPELIPTLVESVKVQDDLRQHRALLTFYHVTKTLAS), 283-317 (QHPISFTPLIQRSLEFSVSYVFTEVGEGVTFERFI), 318-356 (VQCMNLIKMIVKNYAYKPSKNFEDSSPETLEAHKIKMAF), 422-459 (QTLTPVLLEMMQTLEGPTNVEDMNALLIKDAVYNAVGL), 473-509 (WFKTQLLPELQVSHNRYKPLRRRVIWLIGQWISVKFK), 511-548 (DLRPMLYEAICNLLQDQDLVVRIETATTLKLTVDDFEF), 555-593 (PYLETMFTLLFQLLQQVTECDTKMHVLHVLSCVIERVNV), 600-636 (GCLVQYLPLLWKQSEEHNMLRCAILTTLIHLVQGLGA), 640-677 (NLYPFLLPVIQLSTDVSQPPHVYLLEDGLELWLVTLEN), 683-720 (PELLRIFQNMSPLLELSSENLRTCFKIINGYIFLSSTE), 731-773 (QSFY…ILPC), 819-849 (QEMDQLLGNVIEMWVDRMDNITQPERKKLSA), 850-887 (LALLSLLPSDNSVIQDKFCGIINISVEALHDVMTEDPE), and 957-974 (METVDTEIVTQLQEFLQG). At Ser-343 the chain carries Phosphoserine.

It belongs to the importin beta family. As to quaternary structure, interacts with UBE2E3 and RPL12.

It localises to the cytoplasm. The protein resides in the nucleus. In terms of biological role, functions in nuclear protein import as nuclear transport receptor. Serves as receptor for nuclear localization signals (NLS) in cargo substrates. Is thought to mediate docking of the importin/substrate complex to the nuclear pore complex (NPC) through binding to nucleoporin and the complex is subsequently translocated through the pore by an energy requiring, Ran-dependent mechanism. At the nucleoplasmic side of the NPC, Ran binds to the importin, the importin/substrate complex dissociates and importin is re-exported from the nucleus to the cytoplasm where GTP hydrolysis releases Ran. The directionality of nuclear import is thought to be conferred by an asymmetric distribution of the GTP- and GDP-bound forms of Ran between the cytoplasm and nucleus. Mediates the nuclear import of RPL12, and of UBE2E3. The sequence is that of Importin-11 (Ipo11) from Mus musculus (Mouse).